A 414-amino-acid chain; its full sequence is MYNRNILIEQTDPEIFAAIAAENARQEQHIELIASENYASPAVMAAQGTQLTNKYAEGYPGKRYYGGCEFVDIAEQLAIDRVKQIFGADAANVQPHCGASANEAVFLAFLKPGDTIMGMSLAEGGHLTHGMALNMSGKWFNVVSYGLNDKEEIDYDAMERKAHESKPKLIIAGASAYSLRIDFARFAKVAKDVGAIFMVDMAHYAGLIAAGIYPNPVPHADVVTSTTHKSLRGPRGGIILMKAQHEKAINSAIFPGLQGGPLMHVIAAKAVAFKEALQPEFKVYQQQVLTNARVVAETLVSRGLRIVSGRTESHVMLVDLRSKSITGKEAEAVLGSAHMTINKNAIPNDPEKPMVTSGVRIGTPAMTTRGFKDEEARITANLIADVLDNPRDSANIDAVRAKVNALTKRFPVYG.

(6S)-5,6,7,8-tetrahydrofolate-binding positions include Leu-121 and 125–127 (GHL). Lys-229 carries the post-translational modification N6-(pyridoxal phosphate)lysine.

This sequence belongs to the SHMT family. As to quaternary structure, homodimer. Pyridoxal 5'-phosphate serves as cofactor.

It localises to the cytoplasm. It catalyses the reaction (6R)-5,10-methylene-5,6,7,8-tetrahydrofolate + glycine + H2O = (6S)-5,6,7,8-tetrahydrofolate + L-serine. The protein operates within one-carbon metabolism; tetrahydrofolate interconversion. It participates in amino-acid biosynthesis; glycine biosynthesis; glycine from L-serine: step 1/1. Catalyzes the reversible interconversion of serine and glycine with tetrahydrofolate (THF) serving as the one-carbon carrier. This reaction serves as the major source of one-carbon groups required for the biosynthesis of purines, thymidylate, methionine, and other important biomolecules. Also exhibits THF-independent aldolase activity toward beta-hydroxyamino acids, producing glycine and aldehydes, via a retro-aldol mechanism. In Albidiferax ferrireducens (strain ATCC BAA-621 / DSM 15236 / T118) (Rhodoferax ferrireducens), this protein is Serine hydroxymethyltransferase.